Here is a 722-residue protein sequence, read N- to C-terminus: MLLTTGRKEKLSVSKGSEIEISSQEYEYGSGNVWYCVILEENLAKSKRKKLSVRHLDPLLKYDYSPPLIKTTVHRFMRPVPPPDPFPEVDFEEGDVVDAAYKGGWCSGSVVKVLGNRRFLVYLRFQPDVIELLRKDLRPHFVWKDEEWFRCEKQQLIESDFSAGKSVEVRTKVDKLGDVWAPAMVIKEDEDGTMLVKLKTLKEEEVNCTKISVSYSEIRPSPLPIGLRDYKLMENVDALVESGWCPGVVSKVLAGKRYAVDLGPNRESKEFSRLQLRPSIEWKDGIWHRKEKVSGSEESSHAVEETAASTRIRITVRTALKEKKALGTGINVRTTRSSSGAMHNPLPASFNGGDVAEAGRVSVTVNETPLFETAALSGELGNSLADVVMNESAPVTSQPEIAAPKEFHPSVVLGVAAAVKTQGKTTPKKKLQAMKNQKSSTNDSVGEKVSVNKRKRGQPRKFIVAEPKQKIGVSGNNSKAATIEHADMTDDDRPLASWVHTGNSSSGQSVSRTPDIGLNTVVEKHVDIVETPPGRESTMVLPFVKKSQLWKVLESMEVFKVVPQSPHFSPLLESEEECREGDAIGRMVMFSSLLEKVNNLQVDDPISSINRIDECFLKLEKHGFNVTTPRSRIAKILSIKERQTCALEELKAVEEKITENDNKRRKYEEDIVELQRQEVLMKEAKVTLDNEIARMQSQAAVLDQEVQNVDHEFQAILAAPWK.

A disordered region spans residues 424 to 449 (KTTPKKKLQAMKNQKSSTNDSVGEKV). The segment covering 434–444 (MKNQKSSTNDS) has biased composition (polar residues). In terms of domain architecture, DUF724 spans 540–720 (VLPFVKKSQL…HEFQAILAAP (181 aa)). Residues 645-712 (CALEELKAVE…DQEVQNVDHE (68 aa)) are a coiled coil.

As to quaternary structure, homodimer. Interacts wtih ABAP1, ARIA and LHP1. Interacts with the non-modified histones H1, H2B, H3 and H4. In terms of tissue distribution, expressed in roots, leaves, stems and flowers.

The protein localises to the nucleus. In terms of biological role, may act as a link between DNA replication, transcription and chromatin remodeling during flower development. May participate in the repression of LHP1-targeted genes during flower development by direct interaction with LHP1. May be involved in the polar growth of plant cells via transportation of RNAs. The polypeptide is DUF724 domain-containing protein 7 (Arabidopsis thaliana (Mouse-ear cress)).